Reading from the N-terminus, the 493-residue chain is Probable mannosyl-oligosaccharide alpha-1,2-mannosidase 1B (493 aa).

Positions 1 to 18 (MHLPSLSVALALVSSSLA) are cleaved as a signal peptide. Residues Asn-87 and Asn-174 are each glycosylated (N-linked (GlcNAc...) asparagine). A disulfide bridge links Cys-324 with Cys-353. Glu-367 (proton donor) is an active-site residue. A glycan (N-linked (GlcNAc...) asparagine) is linked at Asn-489.

Belongs to the glycosyl hydrolase 47 family. As to quaternary structure, monomer. Ca(2+) serves as cofactor. It depends on Mg(2+) as a cofactor.

Its subcellular location is the cytoplasmic vesicle lumen. It carries out the reaction N(4)-(alpha-D-Man-(1-&gt;2)-alpha-D-Man-(1-&gt;2)-alpha-D-Man-(1-&gt;3)-[alpha-D-Man-(1-&gt;2)-alpha-D-Man-(1-&gt;3)-[alpha-D-Man-(1-&gt;2)-alpha-D-Man-(1-&gt;6)]-alpha-D-Man-(1-&gt;6)]-beta-D-Man-(1-&gt;4)-beta-D-GlcNAc-(1-&gt;4)-beta-D-GlcNAc)-L-asparaginyl-[protein] (N-glucan mannose isomer 9A1,2,3B1,2,3) + 4 H2O = N(4)-(alpha-D-Man-(1-&gt;3)-[alpha-D-Man-(1-&gt;3)-[alpha-D-Man-(1-&gt;6)]-alpha-D-Man-(1-&gt;6)]-beta-D-Man-(1-&gt;4)-beta-D-GlcNAc-(1-&gt;4)-beta-D-GlcNAc)-L-asparaginyl-[protein] (N-glucan mannose isomer 5A1,2) + 4 beta-D-mannose. It catalyses the reaction N(4)-(alpha-D-Man-(1-&gt;2)-alpha-D-Man-(1-&gt;2)-alpha-D-Man-(1-&gt;3)-[alpha-D-Man-(1-&gt;3)-[alpha-D-Man-(1-&gt;2)-alpha-D-Man-(1-&gt;6)]-alpha-D-Man-(1-&gt;6)]-beta-D-Man-(1-&gt;4)-beta-D-GlcNAc-(1-&gt;4)-beta-D-GlcNAc)-L-asparaginyl-[protein] (N-glucan mannose isomer 8A1,2,3B1,3) + 3 H2O = N(4)-(alpha-D-Man-(1-&gt;3)-[alpha-D-Man-(1-&gt;3)-[alpha-D-Man-(1-&gt;6)]-alpha-D-Man-(1-&gt;6)]-beta-D-Man-(1-&gt;4)-beta-D-GlcNAc-(1-&gt;4)-beta-D-GlcNAc)-L-asparaginyl-[protein] (N-glucan mannose isomer 5A1,2) + 3 beta-D-mannose. It functions in the pathway protein modification; protein glycosylation. In terms of biological role, involved in the maturation of Asn-linked oligosaccharides. Progressively trims alpha-1,2-linked mannose residues from Man(9)GlcNAc(2) to produce Man(5)GlcNAc(2). In Neosartorya fischeri (strain ATCC 1020 / DSM 3700 / CBS 544.65 / FGSC A1164 / JCM 1740 / NRRL 181 / WB 181) (Aspergillus fischerianus), this protein is Probable mannosyl-oligosaccharide alpha-1,2-mannosidase 1B (mns1B).